The primary structure comprises 163 residues: MKSLSLLRYLAIAIIVLLLDQLSKWSALSNLQMGIPEPVLPFMNWLLLFNPGTAFSFLAQGSGWQRWFFTVLGLAASIYIIWMLYKSQSDKLLCIALSLILGGALGNVLDRVMYGAVVDFIDLHYANWHWPAFNIADSAICVGAALIIWGELRKSFGKSAQSH.

4 consecutive transmembrane segments (helical) span residues 9–29, 39–59, 67–87, and 92–112; these read YLAI…SALS, VLPF…SFLA, WFFT…LYKS, and LLCI…LDRV. Catalysis depends on residues Asp-119 and Asp-137. Residues 130–150 form a helical membrane-spanning segment; that stretch reads WPAFNIADSAICVGAALIIWG.

This sequence belongs to the peptidase A8 family.

The protein resides in the cell inner membrane. The enzyme catalyses Release of signal peptides from bacterial membrane prolipoproteins. Hydrolyzes -Xaa-Yaa-Zaa-|-(S,diacylglyceryl)Cys-, in which Xaa is hydrophobic (preferably Leu), and Yaa (Ala or Ser) and Zaa (Gly or Ala) have small, neutral side chains.. Its pathway is protein modification; lipoprotein biosynthesis (signal peptide cleavage). This protein specifically catalyzes the removal of signal peptides from prolipoproteins. This chain is Lipoprotein signal peptidase, found in Polynucleobacter necessarius subsp. necessarius (strain STIR1).